Consider the following 504-residue polypeptide: AMP phosphorylase 1 (504 aa).

AMP-binding positions include Gly-169, Ser-195–Ser-200, and Thr-204. The active-site Proton donor is Asp-257. Residues Ser-265 and Lys-289 each contribute to the AMP site.

This sequence belongs to the thymidine/pyrimidine-nucleoside phosphorylase family. Type 2 subfamily.

The enzyme catalyses AMP + phosphate = alpha-D-ribose 1,5-bisphosphate + adenine. The catalysed reaction is CMP + phosphate = cytosine + alpha-D-ribose 1,5-bisphosphate. It carries out the reaction UMP + phosphate = alpha-D-ribose 1,5-bisphosphate + uracil. Its function is as follows. Catalyzes the conversion of AMP and phosphate to adenine and ribose 1,5-bisphosphate (R15P). Exhibits phosphorylase activity toward CMP and UMP in addition to AMP. Functions in an archaeal AMP degradation pathway, together with R15P isomerase and RubisCO. This chain is AMP phosphorylase 1, found in Archaeoglobus fulgidus (strain ATCC 49558 / DSM 4304 / JCM 9628 / NBRC 100126 / VC-16).